Reading from the N-terminus, the 1675-residue chain is Clathrin heavy chain 1 (1675 aa).

Ala-2 carries the post-translational modification N-acetylalanine. The globular terminal domain stretch occupies residues Ala-2–Tyr-479. 7 WD40-like repeat regions span residues Asn-24–Ser-67, Ala-68–Asp-107, Val-108–Ala-149, Gly-150–Glu-195, Gly-196–Gln-257, Asn-258–Glu-301, and Thr-302–Glu-330. Position 67 is a phosphoserine (Ser-67). The residue at position 105 (Thr-105) is a Phosphothreonine. At Tyr-184 the chain carries Phosphotyrosine. Thr-394 bears the Phosphothreonine mark. The tract at residues Glu-449–Asp-465 is binding site for the uncoating ATPase, involved in lattice disassembly. Residues Leu-480–Arg-523 form a flexible linker region. Residues Ile-524–Tyr-634 form a distal segment region. The segment at Ile-524–Met-1675 is heavy chain arm. CHCR repeat units follow at residues Val-537 to Val-683, Ala-686 to Val-828, Ile-833 to Asp-972, Leu-979 to Ala-1124, Tyr-1128 to Ala-1269, Leu-1274 to Asn-1420, and Leu-1423 to Phe-1566. At Tyr-634 the chain carries Phosphotyrosine. Residues Ala-639–Met-1675 are proximal segment. Lys-737 is modified (N6-succinyllysine). Residue Lys-856 is modified to N6-acetyllysine. Phosphotyrosine is present on Tyr-899. Ser-1167 bears the Phosphoserine mark. Tyr-1206 is modified (phosphotyrosine). The interval Ala-1213–Lys-1522 is involved in binding clathrin light chain. Ser-1229 carries the phosphoserine modification. The residue at position 1441 (Lys-1441) is an N6-acetyllysine; alternate. Residue Lys-1441 is modified to N6-succinyllysine; alternate. Residues Tyr-1477 and Tyr-1487 each carry the phosphotyrosine modification. Ser-1494 is modified (phosphoserine). Lys-1501 bears the N6-acetyllysine mark. The interval Ala-1550–Met-1675 is trimerization.

Belongs to the clathrin heavy chain family. As to quaternary structure, clathrin triskelions, composed of 3 heavy chains and 3 light chains, are the basic subunits of the clathrin coat. In the presence of light chains, hub assembly is influenced by both the pH and the concentration of calcium. Interacts with HIP1. Interacts with DENND1A, DENND1B and DENND1C. Interacts with ERBB2. Interacts with FKBP6. Interacts with OCRL. Interacts with CKAP5 and TACC3 forming the TACC3/ch-TOG/clathrin complex located at spindle inter-microtubules bridges; the complex implicates clathrin triskelions; TACC3 and CLTC are proposed to form a composite microtubule interaction surface. Plays a role in early autophagosome formation. Interacts with ATG16L1 (via N-terminus). Interacts with RFTN1; the interaction occurs in response to pathogens. Interacts with USP2 isoform 2. Interacts with TMEM106B (via N-terminus). Interacts with DNAJC6; this interaction produces a local change in heavy-chain contacts, creating a detectable global distortion of the clathrin coat and leads to the recruitment of HSPA8.

The protein localises to the cytoplasmic vesicle membrane. It is found in the membrane. Its subcellular location is the coated pit. It localises to the melanosome. The protein resides in the cytoplasm. The protein localises to the cytoskeleton. It is found in the spindle. Functionally, clathrin is the major protein of the polyhedral coat of coated pits and vesicles. Two different adapter protein complexes link the clathrin lattice either to the plasma membrane or to the trans-Golgi network. Acts as a component of the TACC3/ch-TOG/clathrin complex proposed to contribute to stabilization of kinetochore fibers of the mitotic spindle by acting as inter-microtubule bridge. The TACC3/ch-TOG/clathrin complex is required for the maintenance of kinetochore fiber tension. Plays a role in early autophagosome formation. Interaction with DNAJC6 mediates the recruitment of HSPA8 to the clathrin lattice and creates local destabilization of the lattice promoting uncoating. In Mus musculus (Mouse), this protein is Clathrin heavy chain 1.